Here is a 501-residue protein sequence, read N- to C-terminus: Ammonium transporter 1 member 1 (501 aa).

The next 10 membrane-spanning stretches (helical) occupy residues 8-28, 46-66, 81-101, 128-148, 152-172, 199-219, 243-263, 333-353, 366-386, and 419-439; these read LAVL…GQLG, LLFS…LCAG, VLDA…FAFG, FLYQ…SIAE, FVAY…VVSH, FAGS…GALI, LVVL…PGSF, VVEP…LLGC, LEAA…TALF, and LIQI…LFFI. Thr460 carries the phosphothreonine modification. A phosphoserine mark is found at Ser475, Ser488, Ser490, and Ser492.

The protein belongs to the ammonia transporter channel (TC 1.A.11.2) family. Self interacts. Interacts with the receptor protein kinases CEPR2, At2g28990 and PAM74. Highly expressed in roots. Expressed in root tips, root hairs, root epidermis, rhizodermis, cortex and pericycle. Expressed in leaves epidermal and mesophyll cells.

It localises to the cell membrane. In terms of biological role, high affinity ammonium transporter probably involved in ammonium uptake from the soil, long-distance transport to the shoots and re-uptake of apoplastic ammonium that derives from photorespiration in shoots. Contributes with AMT1-3 to the overall ammonium uptake capacity in roots under nitrogen-deficiency conditions. This chain is Ammonium transporter 1 member 1 (AMT1-1), found in Arabidopsis thaliana (Mouse-ear cress).